The primary structure comprises 89 residues: Small ribosomal subunit protein uS15 (89 aa).

It belongs to the universal ribosomal protein uS15 family. In terms of assembly, part of the 30S ribosomal subunit. Forms a bridge to the 50S subunit in the 70S ribosome, contacting the 23S rRNA.

In terms of biological role, one of the primary rRNA binding proteins, it binds directly to 16S rRNA where it helps nucleate assembly of the platform of the 30S subunit by binding and bridging several RNA helices of the 16S rRNA. Its function is as follows. Forms an intersubunit bridge (bridge B4) with the 23S rRNA of the 50S subunit in the ribosome. The chain is Small ribosomal subunit protein uS15 from Rippkaea orientalis (strain PCC 8801 / RF-1) (Cyanothece sp. (strain PCC 8801)).